A 335-amino-acid chain; its full sequence is Galactosylgalactosylxylosylprotein 3-beta-glucuronosyltransferase 3 (335 aa).

Residues Met1–Asn7 lie on the Cytoplasmic side of the membrane. The chain crosses the membrane as a helical; Signal-anchor for type II membrane protein span at residues Val8 to Gly28. The Lumenal portion of the chain corresponds to Gln29–Val335. UDP-alpha-D-glucuronate contacts are provided by residues Pro82 to Tyr84, Asp113, Arg156, Arg161, and Asp194 to Asp196. Residue Asp196 participates in Mn(2+) binding. The segment at Trp243–Asp252 is interaction with galactose moiety of substrate glycoprotein. Glu281 serves as the catalytic Proton donor/acceptor. Asn300 carries an N-linked (GlcNAc...) asparagine glycan. His308–Arg310 contributes to the UDP-alpha-D-glucuronate binding site. The span at Glu312–Leu322 shows a compositional bias: basic and acidic residues. The tract at residues Glu312 to Val335 is disordered.

It belongs to the glycosyltransferase 43 family. In terms of assembly, homodimer; disulfide-linked. Interacts with PXYLP1; the interaction increases the 2-phosphoxylose phosphatase activity of PXYLP1 during completion of linkage region formation in a B3GAT3-mediated manner. The cofactor is Mn(2+). In terms of processing, N-glycosylated. Expressed in heart, aorta, bone, and also in osteoblasts.

It is found in the golgi apparatus membrane. The protein localises to the golgi apparatus. The protein resides in the cis-Golgi network. It carries out the reaction 3-O-(beta-D-galactosyl-(1-&gt;3)-beta-D-galactosyl-(1-&gt;4)-beta-D-xylosyl)-L-seryl-[protein] + UDP-alpha-D-glucuronate = 3-O-(beta-D-GlcA-(1-&gt;3)-beta-D-Gal-(1-&gt;3)-beta-D-Gal-(1-&gt;4)-beta-D-Xyl)-L-seryl-[protein] + UDP + H(+). Its pathway is protein modification; protein glycosylation. Its function is as follows. Glycosaminoglycans biosynthesis. Involved in forming the linkage tetrasaccharide present in heparan sulfate and chondroitin sulfate. Transfers a glucuronic acid moiety from the uridine diphosphate-glucuronic acid (UDP-GlcUA) to the common linkage region trisaccharide Gal-beta-1,3-Gal-beta-1,4-Xyl covalently bound to a Ser residue at the glycosaminylglycan attachment site of proteoglycans. Can also play a role in the biosynthesis of l2/HNK-1 carbohydrate epitope on glycoproteins. Stimulates 2-phosphoxylose phosphatase activity of PXYLP1 in presence of uridine diphosphate-glucuronic acid (UDP-GlcUA) during completion of linkage region formation. The polypeptide is Galactosylgalactosylxylosylprotein 3-beta-glucuronosyltransferase 3 (B3gat3) (Mus musculus (Mouse)).